We begin with the raw amino-acid sequence, 424 residues long: Serine hydroxymethyltransferase 2 (424 aa).

(6S)-5,6,7,8-tetrahydrofolate is bound by residues Leu-125 and 129–131 (GHL). An N6-(pyridoxal phosphate)lysine modification is found at Lys-234. Residue Glu-250 coordinates (6S)-5,6,7,8-tetrahydrofolate.

It belongs to the SHMT family. In terms of assembly, homodimer. Pyridoxal 5'-phosphate is required as a cofactor.

The protein resides in the cytoplasm. It catalyses the reaction (6R)-5,10-methylene-5,6,7,8-tetrahydrofolate + glycine + H2O = (6S)-5,6,7,8-tetrahydrofolate + L-serine. It functions in the pathway one-carbon metabolism; tetrahydrofolate interconversion. The protein operates within amino-acid biosynthesis; glycine biosynthesis; glycine from L-serine: step 1/1. In terms of biological role, catalyzes the reversible interconversion of serine and glycine with tetrahydrofolate (THF) serving as the one-carbon carrier. This reaction serves as the major source of one-carbon groups required for the biosynthesis of purines, thymidylate, methionine, and other important biomolecules. Also exhibits THF-independent aldolase activity toward beta-hydroxyamino acids, producing glycine and aldehydes, via a retro-aldol mechanism. The protein is Serine hydroxymethyltransferase 2 of Burkholderia mallei (strain ATCC 23344).